A 479-amino-acid polypeptide reads, in one-letter code: Cardiolipin synthase A (479 aa).

2 helical membrane-spanning segments follow: residues 8–28 and 38–58; these read FFGY…LHAV and IAWA…YLVF. PLD phosphodiesterase domains follow at residues 218 to 245 and 392 to 419; these read VNFR…GDEY and QPGF…DNRS. Catalysis depends on residues His-223, Lys-225, Asp-230, His-397, Lys-399, and Asp-404.

The protein belongs to the phospholipase D family. Cardiolipin synthase subfamily. ClsA sub-subfamily.

It localises to the cell inner membrane. It carries out the reaction 2 a 1,2-diacyl-sn-glycero-3-phospho-(1'-sn-glycerol) = a cardiolipin + glycerol. Functionally, catalyzes the reversible phosphatidyl group transfer from one phosphatidylglycerol molecule to another to form cardiolipin (CL) (diphosphatidylglycerol) and glycerol. This chain is Cardiolipin synthase A, found in Pseudomonas putida (strain W619).